We begin with the raw amino-acid sequence, 230 residues long: DNA repair protein rdl1 (230 aa).

As to quaternary structure, interacts with rlp1 and sws1.

It localises to the cytoplasm. The protein resides in the nucleus. Involved in homologous recombination where it functions at an early stage of recombination in a pre-recombinogenic complex with rlp1 and sws1. Also has a role at a later stage of recombination in association with the rhp55-rhp57 complex. In Schizosaccharomyces pombe (strain 972 / ATCC 24843) (Fission yeast), this protein is DNA repair protein rdl1 (rdl1).